Consider the following 448-residue polypeptide: U-box domain-containing protein 30 (448 aa).

One can recognise a U-box domain in the interval 63–137 (DIPSVFICPI…YTWFSQKYVL (75 aa)). ARM repeat units lie at residues 179–219 (LMAR…SLDL) and 221–260 (SDSK…GLVE).

It catalyses the reaction S-ubiquitinyl-[E2 ubiquitin-conjugating enzyme]-L-cysteine + [acceptor protein]-L-lysine = [E2 ubiquitin-conjugating enzyme]-L-cysteine + N(6)-ubiquitinyl-[acceptor protein]-L-lysine.. It functions in the pathway protein modification; protein ubiquitination. Functionally, functions as an E3 ubiquitin ligase. The sequence is that of U-box domain-containing protein 30 (PUB30) from Arabidopsis thaliana (Mouse-ear cress).